The chain runs to 265 residues: Imidazole glycerol phosphate synthase subunit HisF (265 aa).

Catalysis depends on residues D17 and D136.

It belongs to the HisA/HisF family. In terms of assembly, heterodimer of HisH and HisF.

Its subcellular location is the cytoplasm. It carries out the reaction 5-[(5-phospho-1-deoxy-D-ribulos-1-ylimino)methylamino]-1-(5-phospho-beta-D-ribosyl)imidazole-4-carboxamide + L-glutamine = D-erythro-1-(imidazol-4-yl)glycerol 3-phosphate + 5-amino-1-(5-phospho-beta-D-ribosyl)imidazole-4-carboxamide + L-glutamate + H(+). It participates in amino-acid biosynthesis; L-histidine biosynthesis; L-histidine from 5-phospho-alpha-D-ribose 1-diphosphate: step 5/9. In terms of biological role, IGPS catalyzes the conversion of PRFAR and glutamine to IGP, AICAR and glutamate. The HisF subunit catalyzes the cyclization activity that produces IGP and AICAR from PRFAR using the ammonia provided by the HisH subunit. The protein is Imidazole glycerol phosphate synthase subunit HisF of Mycobacterium avium (strain 104).